The following is a 92-amino-acid chain: Elongation factor 1-beta (92 aa).

Belongs to the EF-1-beta/EF-1-delta family.

Its function is as follows. Promotes the exchange of GDP for GTP in EF-1-alpha/GDP, thus allowing the regeneration of EF-1-alpha/GTP that could then be used to form the ternary complex EF-1-alpha/GTP/AAtRNA. This Pyrobaculum arsenaticum (strain DSM 13514 / JCM 11321 / PZ6) protein is Elongation factor 1-beta.